An 886-amino-acid chain; its full sequence is Leucine--tRNA ligase (886 aa).

The 'HIGH' region signature appears at 46-56 (PYPSGKLHMGH). The 'KMSKS' region signature appears at 638 to 642 (TMSKS). K641 is an ATP binding site.

This sequence belongs to the class-I aminoacyl-tRNA synthetase family.

The protein resides in the cytoplasm. The catalysed reaction is tRNA(Leu) + L-leucine + ATP = L-leucyl-tRNA(Leu) + AMP + diphosphate. The sequence is that of Leucine--tRNA ligase from Polaromonas sp. (strain JS666 / ATCC BAA-500).